We begin with the raw amino-acid sequence, 264 residues long: Thymidylate synthase (264 aa).

Residue arginine 21 coordinates dUMP. (6R)-5,10-methylene-5,6,7,8-tetrahydrofolate is bound at residue histidine 51. A dUMP-binding site is contributed by arginine 126 to arginine 127. The active-site Nucleophile is the cysteine 146. Residues arginine 166 to aspartate 169, asparagine 177, and histidine 207 to tyrosine 209 contribute to the dUMP site. Aspartate 169 is a binding site for (6R)-5,10-methylene-5,6,7,8-tetrahydrofolate. A (6R)-5,10-methylene-5,6,7,8-tetrahydrofolate-binding site is contributed by alanine 263.

This sequence belongs to the thymidylate synthase family. Bacterial-type ThyA subfamily. As to quaternary structure, homodimer.

It localises to the cytoplasm. The catalysed reaction is dUMP + (6R)-5,10-methylene-5,6,7,8-tetrahydrofolate = 7,8-dihydrofolate + dTMP. It participates in pyrimidine metabolism; dTTP biosynthesis. Catalyzes the reductive methylation of 2'-deoxyuridine-5'-monophosphate (dUMP) to 2'-deoxythymidine-5'-monophosphate (dTMP) while utilizing 5,10-methylenetetrahydrofolate (mTHF) as the methyl donor and reductant in the reaction, yielding dihydrofolate (DHF) as a by-product. This enzymatic reaction provides an intracellular de novo source of dTMP, an essential precursor for DNA biosynthesis. This chain is Thymidylate synthase, found in Geobacillus kaustophilus (strain HTA426).